A 474-amino-acid polypeptide reads, in one-letter code: Glutamate--tRNA ligase (474 aa).

The 'HIGH' region motif lies at 9 to 19 (PSPTGLLHMGG). The 'KMSKS' region signature appears at 238-242 (KLSKR). Position 241 (K241) interacts with ATP.

Belongs to the class-I aminoacyl-tRNA synthetase family. Glutamate--tRNA ligase type 1 subfamily. Monomer.

Its subcellular location is the cytoplasm. The catalysed reaction is tRNA(Glu) + L-glutamate + ATP = L-glutamyl-tRNA(Glu) + AMP + diphosphate. In terms of biological role, catalyzes the attachment of glutamate to tRNA(Glu) in a two-step reaction: glutamate is first activated by ATP to form Glu-AMP and then transferred to the acceptor end of tRNA(Glu). This is Glutamate--tRNA ligase from Buchnera aphidicola subsp. Cinara cedri (strain Cc).